Consider the following 1604-residue polypeptide: E3 ubiquitin-protein ligase HECW1 (1604 aa).

The C2 domain maps to 182 to 318; it reads SAAPIFKGIG…LERHAIGDRV (137 aa). 4 disordered regions span residues 350-539, 572-604, 642-667, and 727-826; these read DEEI…CSLP, PSAQRGSTTEEEDGLEEESTLKESSEKDGLSEV, GIGAGQDGEAHPSTGSESDSSPQQGA, and STVF…TIDE. A compositionally biased stretch (polar residues) spans 362–380; it reads SAETQDSIMNSMVGNSNGE. Residues 387 to 396 show a composition bias toward basic and acidic residues; that stretch reads EFCKDAKPES. Residues 398–412 are compositionally biased toward polar residues; it reads SEGNGVNSSENQNQE. Composition is skewed to acidic residues over residues 435–444 and 458–469; these read APEEPGELQD and EVAEGLPLDEDS. The span at 494–505 shows a compositional bias: basic and acidic residues; sequence GAREEEMQKGKD. A compositionally biased stretch (acidic residues) spans 580 to 589; the sequence is TEEEDGLEEE. Basic and acidic residues predominate over residues 590–601; it reads STLKESSEKDGL. Composition is skewed to polar residues over residues 654-667, 748-762, and 803-812; these read STGSESDSSPQQGA, DSVQSPELDPESTNG, and HNSQPISQLP. The WW 1 domain maps to 826–859; the sequence is EPLPPNWEARIDSHGRVFYVDHINRTTTWQRPSM. Phosphoserine is present on Ser871. A coiled-coil region spans residues 871–898; the sequence is SVHQMEQLNRRYQNIQRTMATERAEEDS. A disordered region spans residues 890–936; sequence ATERAEEDSGNQNSEQIPDGGGGGGGGSDSEAESSQSSLDLRREGSL. Over residues 908 to 917 the composition is skewed to gly residues; it reads DGGGGGGGGS. A phosphoserine mark is found at Ser935 and Ser937. Positions 1016 to 1049 constitute a WW 2 domain; that stretch reads LELPRGWEIKTDHQGKSFFVDHNSRATTFIDPRI. Residues 1269-1604 enclose the HECT domain; that stretch reads SRKELQRNKL…VEETSTFGLE (336 aa). Catalysis depends on Cys1572, which acts as the Glycyl thioester intermediate.

As to quaternary structure, interacts with DVL1 and SSR3. Predominantly expressed in neurons of the spinal cord.

It localises to the cytoplasm. It carries out the reaction S-ubiquitinyl-[E2 ubiquitin-conjugating enzyme]-L-cysteine + [acceptor protein]-L-lysine = [E2 ubiquitin-conjugating enzyme]-L-cysteine + N(6)-ubiquitinyl-[acceptor protein]-L-lysine.. Its pathway is protein modification; protein ubiquitination. Functionally, E3 ubiquitin-protein ligase that mediates ubiquitination and subsequent degradation of DVL1. This chain is E3 ubiquitin-protein ligase HECW1 (Hecw1), found in Mus musculus (Mouse).